A 123-amino-acid polypeptide reads, in one-letter code: Large ribosomal subunit protein uL18 (123 aa).

It belongs to the universal ribosomal protein uL18 family. Part of the 50S ribosomal subunit; part of the 5S rRNA/L5/L18/L25 subcomplex. Contacts the 5S and 23S rRNAs.

Its function is as follows. This is one of the proteins that bind and probably mediate the attachment of the 5S RNA into the large ribosomal subunit, where it forms part of the central protuberance. This Chlamydia abortus (strain DSM 27085 / S26/3) (Chlamydophila abortus) protein is Large ribosomal subunit protein uL18.